Consider the following 369-residue polypeptide: tRNA-specific 2-thiouridylase MnmA (369 aa).

ATP is bound by residues 12–19 and Met-38; that span reads GMSGGVDS. The interaction with target base in tRNA stretch occupies residues 98–100; it reads NPD. Residue Cys-103 is the Nucleophile of the active site. An intrachain disulfide couples Cys-103 to Cys-200. Gly-128 is a binding site for ATP. Residues 150 to 152 are interaction with tRNA; the sequence is KDQ. Cys-200 functions as the Cysteine persulfide intermediate in the catalytic mechanism. Residues 312–313 are interaction with tRNA; it reads RY.

It belongs to the MnmA/TRMU family. Interacts with TusE.

It is found in the cytoplasm. It catalyses the reaction S-sulfanyl-L-cysteinyl-[protein] + uridine(34) in tRNA + AH2 + ATP = 2-thiouridine(34) in tRNA + L-cysteinyl-[protein] + A + AMP + diphosphate + H(+). Catalyzes the 2-thiolation of uridine at the wobble position (U34) of tRNA(Lys), tRNA(Glu) and tRNA(Gln), leading to the formation of s(2)U34, the first step of tRNA-mnm(5)s(2)U34 synthesis. Sulfur is provided by IscS, via a sulfur-relay system. Binds ATP and its substrate tRNAs. The protein is tRNA-specific 2-thiouridylase MnmA of Sodalis glossinidius (strain morsitans).